The sequence spans 1219 residues: MMRTQSDEHVATRSSSANKQRQRVRFPKDNDPTTKRILYPADENDDGHDDSDEKETSVVIPTPSVVIVGPDGEEPASAPISTGSPGADTDDYFSTHPNKKKSTLKSPGTPTTYSPSVPAGRARSATGVTTHTPPKGSSLSSTTLMNTLLNSSGLGQYDTESEEDDDEDEEVTFTARPRQPAQPSNSEEAGPSEQPQFRIDKVKSISLMRARQSRAREAQEEETVASTDDDGVGNNDMFKIDDDARSVSTDESSDDESDADRAARADAPLIERERASAAHVDAFAQNSERGSNMAVGAAIMGGLASFGSMSGGGMAPGAVDRSSESSQTLDDQRDQRDSHLALRRENALGMHSHSAPGSEDHTPGDASGNASAGNHDDGEDSLAGHDINDIPLVALDRRLEDIKEKRAEDKEKRAEDNEKERQHHHHNHHHHHSSETGPNTGASSPFSEEEKDREAEEAEILRDQARDLVNQHKHAVHTPDAEDEDYDPFTAPAVDYFSSIHIHDDDEDEDNHGNFLTYDAADGSVTPTHEDYVAPPKRFKQGVLGALLKLYNEEEGNKSTSTLATTVGDGTSTGDVSPMLYGSEPTTPGGTPIDHPTKSKTKTTQKLGLKKKKKELLKIIEDQRKEKEENKKRPKWYDKSRSTSPSPGGTPAPHHHHHIPGLHLHHHTKGHQRSHSEGYLDEMETAAGGGGDGGDKPPDRPRSLRSEALRPVKDIKKLNKMAKNTGKNFKKRERELKRRRRQEVKITVHIAELLQRQRFILRMCRALMLYGAPTHRLEEYMKMTSRILEIDGQFLYIPGCMIVSFGDATTHTSEMQLVRCVQGVNLSKLQDTHEIYKEVVHDMIGVEEASNRLDEILRSKNLYPPWLCVIFFACGTGVVSPYAFRGRWADIPMCIILGSVVGFFQIIVAPRSDLYNNVFEVSMSILISFLARAIGTISSGGSHPFCFAAIAQGSLAIILPGYIVLCGSLELQSKNIVAGSIRMFYAVIYSMFLGFGITLGAVVYGWCDHNATRQDKCPQQLDPLWRILFVPLYSFFIALVNQARITQLPSMLLISGAGYTVTYFVGANIPDPDNSSYLTSAIGAFTIGILGNLYSRLGHGLAFAAMLPGIFVQVPSGVASQGSLVAAIANSNRLIGNKNVTTTIRETIVNSATSTVVTRVQTSLLTETSTAAIEQATPGGAANLGFTMIQVAIGITVGLFAATLCVYPFGKKRSGLFTF.

The segment covering Met-1 to Ala-11 has biased composition (basic and acidic residues). Disordered regions lie at residues Met-1–Glu-273, Leu-303–Thr-490, His-503–Val-533, and Glu-555–Lys-713. The segment covering Asp-42–Glu-53 has biased composition (acidic residues). The segment covering Ser-57–Val-68 has biased composition (low complexity). A compositionally biased stretch (polar residues) spans Leu-104 to Pro-115. The segment covering Gly-136 to Gly-155 has biased composition (low complexity). Acidic residues-rich tracts occupy residues Thr-159–Val-171 and Gln-219–Gly-231. Basic and acidic residues-rich tracts occupy residues Ala-259–Glu-273, Asp-330–Asn-346, and Leu-395–Arg-421. Residues Gln-422–His-432 are compositionally biased toward basic residues. The segment covering Glu-435–Phe-446 has biased composition (polar residues). Residues Glu-448 to Asn-470 show a composition bias toward basic and acidic residues. Residues Thr-565–Ser-577 are compositionally biased toward low complexity. The segment covering Lys-598–Glu-615 has biased composition (basic residues). Residues Leu-616 to Arg-641 show a composition bias toward basic and acidic residues. The segment covering Ser-642–Ala-652 has biased composition (low complexity). Positions Pro-653–Arg-673 are enriched in basic residues. The span at Gly-693–Lys-713 shows a compositional bias: basic and acidic residues. A run of 10 helical transmembrane segments spans residues Pro-864–Phe-884, Trp-888–Val-908, Val-918–Ser-938, Phe-945–Leu-965, Met-983–Val-1003, Leu-1021–Asn-1041, Pro-1049–Ile-1069, Ser-1075–Ser-1095, Gly-1100–Ser-1120, and Leu-1184–Leu-1204.

Belongs to the ThrE exporter (TC 2.A.79) family.

It is found in the membrane. This Yarrowia lipolytica (strain CLIB 122 / E 150) (Yeast) protein is Pheromone-regulated membrane protein 10.